Here is a 107-residue protein sequence, read N- to C-terminus: Homeobox protein HD-7 (107 aa).

The homeobox DNA-binding region spans Lys21–Asn80.

It is found in the nucleus. This is Homeobox protein HD-7 (HD-7) from Encephalitozoon cuniculi (strain GB-M1) (Microsporidian parasite).